A 425-amino-acid polypeptide reads, in one-letter code: Interferon regulatory factor 8 (425 aa).

The IRF tryptophan pentad repeat DNA-binding region spans 7 to 114 (GRRLRQWLIE…EPYKVYRIVP (108 aa)).

This sequence belongs to the IRF family.

The protein localises to the nucleus. The protein resides in the cytoplasm. Plays a role as a transcriptional activator or repressor. Specifically binds to the upstream regulatory region of type I IFN and IFN-inducible MHC class I genes (the interferon consensus sequence (ICS)). Plays a regulatory role in cells of the immune system. This is Interferon regulatory factor 8 (IRF8) from Gallus gallus (Chicken).